We begin with the raw amino-acid sequence, 514 residues long: 1-pyrroline-5-carboxylate dehydrogenase (514 aa).

Catalysis depends on residues Glu-286 and Cys-320.

This sequence belongs to the aldehyde dehydrogenase family. RocA subfamily.

It catalyses the reaction L-glutamate 5-semialdehyde + NAD(+) + H2O = L-glutamate + NADH + 2 H(+). It functions in the pathway amino-acid degradation; L-proline degradation into L-glutamate; L-glutamate from L-proline: step 2/2. The sequence is that of 1-pyrroline-5-carboxylate dehydrogenase from Staphylococcus aureus (strain MSSA476).